Here is a 233-residue protein sequence, read N- to C-terminus: 5'-methylthioadenosine/S-adenosylhomocysteine nucleosidase (233 aa).

Glu12 acts as the Proton acceptor in catalysis. Substrate contacts are provided by residues Gly78, Ile156, and 177-178 (ME). Residue Asp201 is the Proton donor of the active site.

Belongs to the PNP/UDP phosphorylase family. MtnN subfamily.

It carries out the reaction S-adenosyl-L-homocysteine + H2O = S-(5-deoxy-D-ribos-5-yl)-L-homocysteine + adenine. It catalyses the reaction S-methyl-5'-thioadenosine + H2O = 5-(methylsulfanyl)-D-ribose + adenine. The enzyme catalyses 5'-deoxyadenosine + H2O = 5-deoxy-D-ribose + adenine. It functions in the pathway amino-acid biosynthesis; L-methionine biosynthesis via salvage pathway; S-methyl-5-thio-alpha-D-ribose 1-phosphate from S-methyl-5'-thioadenosine (hydrolase route): step 1/2. Functionally, catalyzes the irreversible cleavage of the glycosidic bond in both 5'-methylthioadenosine (MTA) and S-adenosylhomocysteine (SAH/AdoHcy) to adenine and the corresponding thioribose, 5'-methylthioribose and S-ribosylhomocysteine, respectively. Also cleaves 5'-deoxyadenosine, a toxic by-product of radical S-adenosylmethionine (SAM) enzymes, into 5-deoxyribose and adenine. In Listeria innocua serovar 6a (strain ATCC BAA-680 / CLIP 11262), this protein is 5'-methylthioadenosine/S-adenosylhomocysteine nucleosidase.